The chain runs to 119 residues: Beta-2-microglobulin (119 aa).

A signal peptide spans 1–20 (MARFVVVALLALLSLSGLEA). Positions 25 to 114 (PKIQVYSRHP…VTFPTPKTVK (90 aa)) constitute an Ig-like C1-type domain. A disulfide bridge links Cys-45 with Cys-100.

This sequence belongs to the beta-2-microglobulin family. Heterodimer of an alpha chain and a beta chain. Beta-2-microglobulin is the beta-chain of major histocompatibility complex class I molecules.

The protein resides in the secreted. In terms of biological role, component of the class I major histocompatibility complex (MHC). Involved in the presentation of peptide antigens to the immune system. This is Beta-2-microglobulin (B2M) from Alouatta seniculus (Red howler monkey).